Consider the following 465-residue polypeptide: MAKKAPDVGNYQYGFHDEDVSIFRSERGLTENIVREISNMKEEPEWMLNYRLKSLKQFYKMPMPQWGGDLSELDFDDITYYVKPSENTERSWDEVPEEIKRTFDKLGIPEAEQKYLAGVSAQYESEVVYHNMEKELEDKGIIFKDTDSALRENEELFKQYFSTVVPAADNKFSALNSAVWSGGSFIYVPKNIKLDTPLQAYFRINSENMGQFERTLIIADEGASVNYVEGCTAPVYSTSSLHSAVVEIIVHKDAHVRYTTIQNWANNVYNLVTKRTLVYENGNMEWVDGNLGSKLTMKYPNCVLMGEGAKGSTLSIAFAGKGQVQDAGAKMIHKAPNTSSTIVSKSISKDGGKVVYRGIVHFGRKAKGARSNIECDTLILDNESTSDTIPYNEVFNDNISLEHEAKVSKVSEEQLFYLMSRGISEEEATEMIVMGFIEPFTKELPMEYAVEMNRLIKFEMEGSIG.

It belongs to the iron-sulfur cluster assembly SufBD family.

In Staphylococcus saprophyticus subsp. saprophyticus (strain ATCC 15305 / DSM 20229 / NCIMB 8711 / NCTC 7292 / S-41), this protein is Iron-sulfur cluster assembly SufBD family protein SSP1857.